The sequence spans 385 residues: UPF0744 protein YSD83 (385 aa).

This sequence belongs to the UPF0744 family.

In Saccharomyces paradoxus (Yeast), this protein is UPF0744 protein YSD83 (YSD83).